The sequence spans 1409 residues: DNA-directed RNA polymerase subunit beta' (1409 aa).

Residues Cys-70, Cys-72, Cys-85, and Cys-88 each coordinate Zn(2+). Mg(2+) is bound by residues Asp-460, Asp-462, and Asp-464. Zn(2+) is bound by residues Cys-822, Cys-896, Cys-903, and Cys-906.

The protein belongs to the RNA polymerase beta' chain family. As to quaternary structure, the RNAP catalytic core consists of 2 alpha, 1 beta, 1 beta' and 1 omega subunit. When a sigma factor is associated with the core the holoenzyme is formed, which can initiate transcription. It depends on Mg(2+) as a cofactor. Zn(2+) serves as cofactor.

The catalysed reaction is RNA(n) + a ribonucleoside 5'-triphosphate = RNA(n+1) + diphosphate. Its function is as follows. DNA-dependent RNA polymerase catalyzes the transcription of DNA into RNA using the four ribonucleoside triphosphates as substrates. In Methylobacillus flagellatus (strain ATCC 51484 / DSM 6875 / VKM B-1610 / KT), this protein is DNA-directed RNA polymerase subunit beta'.